We begin with the raw amino-acid sequence, 549 residues long: NADH-quinone oxidoreductase subunit N (549 aa).

14 helical membrane passes run 26-46 (LSPL…EAFV), 57-77 (ALAM…VGAL), 96-116 (PSLF…LLIA), 148-168 (HTEV…FTAA), 171-191 (FLTM…LCGL), 206-226 (YFLL…MVYG), 253-273 (LLIG…TVPF), 297-317 (LVAA…TTVA), 321-341 (PMLW…AVTQ), 347-367 (LLAY…VAAN), 375-395 (MFYL…VTLV), 421-441 (AASL…SGFI), 466-486 (SAVT…AEPA), and 496-516 (GILT…LGIL).

This sequence belongs to the complex I subunit 2 family. In terms of assembly, NDH-1 is composed of 14 different subunits. Subunits NuoA, H, J, K, L, M, N constitute the membrane sector of the complex.

The protein resides in the cell membrane. It catalyses the reaction a quinone + NADH + 5 H(+)(in) = a quinol + NAD(+) + 4 H(+)(out). Its function is as follows. NDH-1 shuttles electrons from NADH, via FMN and iron-sulfur (Fe-S) centers, to quinones in the respiratory chain. The immediate electron acceptor for the enzyme in this species is believed to be a menaquinone. Couples the redox reaction to proton translocation (for every two electrons transferred, four hydrogen ions are translocated across the cytoplasmic membrane), and thus conserves the redox energy in a proton gradient. In Thermobifida fusca (strain YX), this protein is NADH-quinone oxidoreductase subunit N.